Consider the following 618-residue polypeptide: DNA mismatch repair protein MutL (618 aa).

Low complexity predominate over residues 367 to 381 (EPTAAREPATPRYSG). The disordered stretch occupies residues 367-402 (EPTAAREPATPRYSGGASGGNGGRQSAGGWPHAQPG). The segment covering 382–392 (GASGGNGGRQS) has biased composition (gly residues).

The protein belongs to the DNA mismatch repair MutL/HexB family.

Functionally, this protein is involved in the repair of mismatches in DNA. It is required for dam-dependent methyl-directed DNA mismatch repair. May act as a 'molecular matchmaker', a protein that promotes the formation of a stable complex between two or more DNA-binding proteins in an ATP-dependent manner without itself being part of a final effector complex. This chain is DNA mismatch repair protein MutL, found in Salmonella heidelberg (strain SL476).